The following is a 196-amino-acid chain: Orotate phosphoribosyltransferase (196 aa).

117 to 125 (EDIVTTGLS) contributes to the 5-phospho-alpha-D-ribose 1-diphosphate binding site. Orotate contacts are provided by threonine 121 and arginine 149.

It belongs to the purine/pyrimidine phosphoribosyltransferase family. PyrE subfamily. Homodimer. Requires Mg(2+) as cofactor.

It carries out the reaction orotidine 5'-phosphate + diphosphate = orotate + 5-phospho-alpha-D-ribose 1-diphosphate. The protein operates within pyrimidine metabolism; UMP biosynthesis via de novo pathway; UMP from orotate: step 1/2. Functionally, catalyzes the transfer of a ribosyl phosphate group from 5-phosphoribose 1-diphosphate to orotate, leading to the formation of orotidine monophosphate (OMP). In Methylorubrum extorquens (strain PA1) (Methylobacterium extorquens), this protein is Orotate phosphoribosyltransferase.